Consider the following 308-residue polypeptide: Limonin dehydrogenase (308 aa).

It belongs to the aldehyde dehydrogenase family.

The protein localises to the periplasm. Its activity is regulated as follows. Completely inhibited by HgCl(2), CoCl(2) and CaCl(2). Functionally, catalyzes the NAD(+)-dependent conversion of limonin. This is Limonin dehydrogenase from Pseudomonas putida (Arthrobacter siderocapsulatus).